Consider the following 231-residue polypeptide: MRFDVISVIPYFFDSVLTSGLLNIARKKGEVEIYIHNLHDYGLGRYKQVDDAPYGGGAGMVIRPEPVFACIEALQAERHYDAVIFLTPDGELLEQPLANRLSRLENLLLLCGHYKAIDERIREQLITMEISVGDVVLSGGEIPALMLMDAIVRLIPGVLGDSESALTDSFQNGLLDAAYYTRPADFRGMKVPEVLLSGHQAHIEQWRTASALERTKIRRPDLLERAWREEF.

An S-adenosyl-L-methionine-binding site is contributed by Gly112.

This sequence belongs to the RNA methyltransferase TrmD family. In terms of assembly, homodimer.

Its subcellular location is the cytoplasm. It carries out the reaction guanosine(37) in tRNA + S-adenosyl-L-methionine = N(1)-methylguanosine(37) in tRNA + S-adenosyl-L-homocysteine + H(+). In terms of biological role, specifically methylates guanosine-37 in various tRNAs. The sequence is that of tRNA (guanine-N(1)-)-methyltransferase from Chlorobium chlorochromatii (strain CaD3).